The primary structure comprises 184 residues: Adenylate kinase 2 (184 aa).

Residue 10 to 15 (GSGKST) participates in ATP binding. The segment at 30-59 (STGEILREAISHLSELGRHAQPYMIKGELV) is NMP. Residues threonine 31, arginine 36, 57–59 (ELV), 85–88 (GYPR), and glutamine 92 contribute to the AMP site. Residues 126-132 (GRSLPDD) form an LID region. Arginine 127 lines the ATP pocket. Residue arginine 140 participates in AMP binding. Position 168 (glutamine 168) interacts with ATP.

It belongs to the adenylate kinase family. As to quaternary structure, monomer.

Its subcellular location is the cytoplasm. It catalyses the reaction AMP + ATP = 2 ADP. It participates in purine metabolism; AMP biosynthesis via salvage pathway; AMP from ADP: step 1/1. Its function is as follows. Catalyzes the reversible transfer of the terminal phosphate group between ATP and AMP. Plays an important role in cellular energy homeostasis and in adenine nucleotide metabolism. The sequence is that of Adenylate kinase 2 from Nostoc sp. (strain PCC 7120 / SAG 25.82 / UTEX 2576).